The primary structure comprises 522 residues: Target of rapamycin complex 2 subunit MAPKAP1 (522 aa).

Ala2 is subject to N-acetylalanine. The segment at 2–184 (AFLDNPTIIL…KKIDVYLPLH (183 aa)) is interaction with MAP3K2. The interval 2–267 (AFLDNPTIIL…GFSTLALVEK (266 aa)) is interaction with NBN. Thr86 is subject to Phosphothreonine. Ser128, Ser186, Ser315, and Ser356 each carry phosphoserine. Residues 139–267 (QSILSVRLEQ…GFSTLALVEK (129 aa)) enclose the CRIM domain. The segment at 279-353 (LFVRINAAHG…QSAWEFCLVR (75 aa)) is SIN1-type RBD. An SIN1-type PH domain is found at 382–487 (HYKSFKVSMI…IVLKVNYILE (106 aa)). Arg393 serves as a coordination point for a 1,2-diacyl-sn-glycero-3-phospho-(1D-myo-inositol-3,4,5-trisphosphate). Phosphothreonine is present on Thr398. Residues Lys428 and Lys464 each contribute to the a 1,2-diacyl-sn-glycero-3-phospho-(1D-myo-inositol-3,4,5-trisphosphate) site. The segment at 468–522 (FESDAATVNEIVLKVNYILESRASTARADYFAQKQRKLNRRTSFSFQKEKKSGQQ) is interaction with ATF2. Ser510 carries the post-translational modification Phosphoserine.

It belongs to the SIN1 family. As to quaternary structure, component of the mechanistic target of rapamycin complex 2 (mTORC2), consisting in two heterotretramers composed of MTOR, MLST8, RICTOR and MAPKAP1/SIN1. The mTORC2 core complex associates with PRR5/PROTOR1 and/or PRR5L/PROTOR2. Contrary to mTORC1, mTORC2 does not bind to and is not sensitive to FKBP12-rapamycin. Interacts with MAP3K2. Interacts with ATF2. Interacts with MAPK8. Interacts with GTP-bound HRAS and KRAS; inhibiting their activity. Interacts with IFNAR2. In terms of processing, phosphorylation at Ser-128 by PKC promotes relocalization to the perinuclear region, where the mTORC2 complex specifically mediates phosphorylation of SGK1. Phosphorylated at Thr-86 by AKT1 or RPS6KB1 in the presence of growth factors; the effect of this phosphorylation is however unclear. According to two studies, phosphorylation at Thr-86 by AKT1 is part of a positive feedback loop that increases mTORC2 activation. According to another study, phosphorylation at Thr-86 and Thr-398 by RPS6KB1 promotes dissociation from the mTORC2 complex, leading to inhibit mTORC2 signaling.

It localises to the cell membrane. Its subcellular location is the endoplasmic reticulum membrane. The protein localises to the early endosome membrane. The protein resides in the late endosome membrane. It is found in the lysosome membrane. It localises to the golgi apparatus membrane. Its subcellular location is the mitochondrion outer membrane. The protein localises to the cytoplasm. The protein resides in the perinuclear region. It is found in the nucleus. Its activity is regulated as follows. Phosphatidylinositol 3,4,5-trisphosphate (PI(3,4,5)P3) promotes MTOR activation by relieving MAPKAP1/SIN1-mediated inhibition of MTOR that takes place in absence of PI(3,4,5)P3. In terms of biological role, component of the mechanistic target of rapamycin complex 2 (mTORC2), which transduces signals from growth factors to pathways involved in proliferation, cytoskeletal organization, lipogenesis and anabolic output. In response to growth factors, mTORC2 phosphorylates and activates AGC protein kinase family members, including AKT (AKT1, AKT2 and AKT3), PKC (PRKCA, PRKCB and PRKCE) and SGK1. In contrast to mTORC1, mTORC2 is nutrient-insensitive. Within the mTORC2 complex, MAPKAP1/SIN1 acts as a substrate adapter which recognizes and binds AGC protein kinase family members for phosphorylation by MTOR. mTORC2 plays a critical role in AKT1 activation by mediating phosphorylation of different sites depending on the context, such as 'Thr-450', 'Ser-473', 'Ser-477' or 'Thr-479', facilitating the phosphorylation of the activation loop of AKT1 on 'Thr-308' by PDPK1/PDK1 which is a prerequisite for full activation. mTORC2 catalyzes the phosphorylation of SGK1 at 'Ser-422' and of PRKCA on 'Ser-657'. The mTORC2 complex also phosphorylates various proteins involved in insulin signaling, such as FBXW8 and IGF2BP1. mTORC2 acts upstream of Rho GTPases to regulate the actin cytoskeleton, probably by activating one or more Rho-type guanine nucleotide exchange factors. mTORC2 promotes the serum-induced formation of stress-fibers or F-actin. MAPKAP1 inhibits MAP3K2 by preventing its dimerization and autophosphorylation. Inhibits HRAS and KRAS independently of mTORC2 complex. Enhances osmotic stress-induced phosphorylation of ATF2 and ATF2-mediated transcription. Involved in ciliogenesis, regulates cilia length through its interaction with CCDC28B independently of mTORC2 complex. The sequence is that of Target of rapamycin complex 2 subunit MAPKAP1 (MAPKAP1) from Bos taurus (Bovine).